The primary structure comprises 259 residues: Ubiquinol-cytochrome c reductase complex assembly factor 1 (259 aa).

Belongs to the CBP3 family. In terms of assembly, interacts with sloth1; the interaction is probably involved in the assembly and stability of the mitochondrial ubiquinol-cytochrome c reductase complex.

The protein localises to the mitochondrion inner membrane. In terms of biological role, required for the assembly of the ubiquinol-cytochrome c reductase complex (mitochondrial respiratory chain complex III or cytochrome b-c1 complex). May be involved in cytochrome b translation and/or stability. The chain is Ubiquinol-cytochrome c reductase complex assembly factor 1 from Drosophila melanogaster (Fruit fly).